The sequence spans 297 residues: MNDLIEDFLHFLIVERGLSANTIKAYERDLRYFVSYMDVAKGLTDPNTLERSDIVGFMAFARQEGKSARSVARYIASLRSFFHYLMHDGKMSHDPMIQIETPKQAQGLPKVLNLDDVEKLLSSSDTSTPLGLRDQAMMEILYATGLRVTELVSLKMDDLHLHMGFIQTIGKGDKERIIPLGKTATTVLEKYLEEARPKLRRPKYRNDFVFLNHHGQGLTRQGFWKILKGIAKESGIEKPITPHTLRHSFATHLLENGADLRSVQELLGHADISTTQIYTHVTKLRLKDVYKQFHPRA.

The Core-binding (CB) domain occupies 1–86; that stretch reads MNDLIEDFLH…SLRSFFHYLM (86 aa). The Tyr recombinase domain occupies 107–291; the sequence is GLPKVLNLDD…TKLRLKDVYK (185 aa). Catalysis depends on residues Arg-147, Lys-171, His-243, Arg-246, and His-269. Residue Tyr-278 is the O-(3'-phospho-DNA)-tyrosine intermediate of the active site.

This sequence belongs to the 'phage' integrase family. XerD subfamily. In terms of assembly, forms a cyclic heterotetrameric complex composed of two molecules of XerC and two molecules of XerD.

It localises to the cytoplasm. In terms of biological role, site-specific tyrosine recombinase, which acts by catalyzing the cutting and rejoining of the recombining DNA molecules. The XerC-XerD complex is essential to convert dimers of the bacterial chromosome into monomers to permit their segregation at cell division. It also contributes to the segregational stability of plasmids. In Listeria monocytogenes serotype 4b (strain F2365), this protein is Tyrosine recombinase XerD.